Consider the following 67-residue polypeptide: MKVTAVLMVAVLVLTACQLTTANTTDYVRRILARKSTMSKRYCSDSGGWCGLDPELCCNSSCFVLCG.

Residues 1–22 (MKVTAVLMVAVLVLTACQLTTA) form the signal peptide. Residues 23–39 (NTTDYVRRILARKSTMS) constitute a propeptide that is removed on maturation. Disulfide bonds link C43–C58, C50–C62, and C57–C66. A Cysteine amide modification is found at C66.

The protein belongs to the conotoxin O1 superfamily. As to expression, expressed by the venom duct.

It is found in the secreted. The chain is Conotoxin Cl6.8 from Californiconus californicus (California cone).